Reading from the N-terminus, the 158-residue chain is Small ribosomal subunit protein uS9 (158 aa).

This sequence belongs to the universal ribosomal protein uS9 family.

The sequence is that of Small ribosomal subunit protein uS9 from Brucella anthropi (strain ATCC 49188 / DSM 6882 / CCUG 24695 / JCM 21032 / LMG 3331 / NBRC 15819 / NCTC 12168 / Alc 37) (Ochrobactrum anthropi).